A 961-amino-acid polypeptide reads, in one-letter code: Vinculin (961 aa).

A run of 2 repeats spans residues 258 to 362 and 371 to 470. Residues 258-470 are 2 X repeats; sequence ELDNLTVLKK…LTQKLYELKA (213 aa). The interval 720 to 778 is disordered; it reads AIAPPQPPPLPTSLPPPIPELSALHLSNQNAERAPPRPPLPREGLAPVRPPPPETDDED. Residues 723-738 are compositionally biased toward pro residues; sequence PPQPPPLPTSLPPPIP. Threonine 774 carries the post-translational modification Phosphothreonine.

This sequence belongs to the vinculin/alpha-catenin family. Exhibits self-association properties.

Its subcellular location is the cytoplasm. It localises to the cytoskeleton. The protein localises to the cell junction. It is found in the adherens junction. The protein resides in the cell membrane. In terms of biological role, involved in cell adhesion. May be involved in the attachment of the actin-based microfilaments to the plasma membrane. The protein is Vinculin (Vinc) of Drosophila melanogaster (Fruit fly).